A 305-amino-acid chain; its full sequence is Ribonuclease BN (305 aa).

Zn(2+)-binding residues include His-64, His-66, Asp-68, His-69, His-141, Asp-212, and His-270. Asp-68 functions as the Proton acceptor in the catalytic mechanism.

It belongs to the RNase Z family. RNase BN subfamily. Homodimer. It depends on Zn(2+) as a cofactor.

Its function is as follows. Zinc phosphodiesterase, which has both exoribonuclease and endoribonuclease activities. This Escherichia coli O45:K1 (strain S88 / ExPEC) protein is Ribonuclease BN.